We begin with the raw amino-acid sequence, 115 residues long: DNA-binding protein PYRAB09250 (115 aa).

This sequence belongs to the PDCD5 family.

The protein is DNA-binding protein PYRAB09250 of Pyrococcus abyssi (strain GE5 / Orsay).